Here is a 511-residue protein sequence, read N- to C-terminus: Exodeoxyribonuclease 7 large subunit (511 aa).

Belongs to the XseA family. As to quaternary structure, heterooligomer composed of large and small subunits.

The protein resides in the cytoplasm. It catalyses the reaction Exonucleolytic cleavage in either 5'- to 3'- or 3'- to 5'-direction to yield nucleoside 5'-phosphates.. In terms of biological role, bidirectionally degrades single-stranded DNA into large acid-insoluble oligonucleotides, which are then degraded further into small acid-soluble oligonucleotides. The chain is Exodeoxyribonuclease 7 large subunit from Brucella suis (strain ATCC 23445 / NCTC 10510).